The primary structure comprises 910 residues: Potassium/sodium hyperpolarization-activated cyclic nucleotide-gated channel 1 (910 aa).

The tract at residues 1-75 (MEGGGKPNSA…PAGSFEDAEG (75 aa)) is disordered. Over 1-131 (MEGGGKPNSA…WIIHPYSDFR (131 aa)) the chain is Cytoplasmic. A helical transmembrane segment spans residues 132–153 (FYWDLIMLIMMVGNLVIIPVGI). Residues 154-162 (TFFTEQTTT) are Extracellular-facing. The chain crosses the membrane as a helical span at residues 163 to 183 (PWIIFNVASDTVFLLDLIMNF). Over 184 to 204 (RTGTVNEDSSEIILDPKVIKM) the chain is Cytoplasmic. Residues 205-225 (NYLKSWFVVDFISSIPVDYIF) form a helical membrane-spanning segment. The Extracellular portion of the chain corresponds to 226-249 (LIVEKGMDSEVYKTARALRIVRFT). The helical; Voltage-sensor transmembrane segment at 250 to 270 (KILSLLRLLRLSRLIRYIHQW) threads the bilayer. Residues 271 to 284 (EEIFHMTYDLASAV) are Cytoplasmic-facing. Residues 285 to 307 (VRIFNLIGMMLLLCHWDGCLQFL) traverse the membrane as a helical segment. Residues 308–333 (VPLLQDFPPDCWVSLNEMVNDSWGKQ) lie on the Extracellular side of the membrane. An N-linked (GlcNAc...) asparagine glycan is attached at Asn327. The pore-forming intramembrane region spans 334-355 (YSYALFKAMSHMLCIGYGAQAP). The short motif at 347-351 (CIGYG) is the Selectivity filter element. Residues 356–360 (VSMSD) lie on the Extracellular side of the membrane. The helical transmembrane segment at 361 to 381 (LWITMLSMIVGATCYAMFVGH) threads the bilayer. Over 382–910 (ATALIQSLDS…AEKPRFASNL (529 aa)) the chain is Cytoplasmic. 7 residues coordinate 3',5'-cyclic AMP: Gly528, Glu529, Cys531, Arg538, Thr539, Arg579, and Arg582. 3 disordered regions span residues 634-681 (TALN…QPSA), 771-791 (QQQQQPQTPGSSTPKNEVHKS), and 865-910 (QMSS…ASNL). Low complexity predominate over residues 639–680 (TSSTTTPTSRMRTQSPPVYTATSLSHSNLHSPSPSTQTPQPS). The span at 780-791 (GSSTPKNEVHKS) shows a compositional bias: polar residues. The span at 875–885 (RGVPPAPPPPA) shows a compositional bias: pro residues. The span at 900 to 910 (DAEKPRFASNL) shows a compositional bias: basic and acidic residues.

It belongs to the potassium channel HCN family. In terms of assembly, homotetramer. Heterotetramer with HCN2. The potassium channel is composed of a homo- or heterotetrameric complex of pore-forming subunits. Interacts with KCNE2. Interacts with the SH3 domain of CSK. Post-translationally, N-glycosylated. Predominantly expressed in brain. Highly expressed in apical dendrites of pyramidal neurons in the cortex, in the layer corresponding to the stratum lacunosum-moleculare in the hippocampus and in axons of basket cells in the cerebellum (at protein level). Expressed in a subset of elongated cells in taste buds.

It is found in the cell membrane. It carries out the reaction Na(+)(in) = Na(+)(out). The enzyme catalyses K(+)(in) = K(+)(out). Its activity is regulated as follows. Activated by cAMP. cAMP binding causes a conformation change that leads to the assembly of an active tetramer and channel opening. Compared to other family members, cAMP has less stimulatory effect on HCN1 because part of the molecules already contain bound cAMP and form homotetramers when cAMP levels are low, this inherent tetramerization in HCN1 results in a weaker response to increased cAMP. In terms of biological role, hyperpolarization-activated ion channel that are permeable to sodium and potassium ions. Exhibits weak selectivity for potassium over sodium ions. Contributes to the native pacemaker currents in heart (If) and in neurons (Ih). Participates in cerebellar mechanisms of motor learning. May mediate responses to sour stimuli. The polypeptide is Potassium/sodium hyperpolarization-activated cyclic nucleotide-gated channel 1 (Hcn1) (Mus musculus (Mouse)).